The sequence spans 877 residues: Phosphoenolpyruvate carboxylase (877 aa).

Residues His-137 and Lys-542 contribute to the active site.

This sequence belongs to the PEPCase type 1 family. Requires Mg(2+) as cofactor.

The catalysed reaction is oxaloacetate + phosphate = phosphoenolpyruvate + hydrogencarbonate. Functionally, forms oxaloacetate, a four-carbon dicarboxylic acid source for the tricarboxylic acid cycle. This Tolumonas auensis (strain DSM 9187 / NBRC 110442 / TA 4) protein is Phosphoenolpyruvate carboxylase.